The chain runs to 537 residues: Pentatricopeptide repeat-containing protein At1g02370, mitochondrial (537 aa).

Residues 1–18 constitute a mitochondrion transit peptide; sequence MNFRNLIASGSRLGKRFC. PPR repeat units lie at residues 171 to 205, 206 to 240, 241 to 275, 277 to 307, 312 to 346, 347 to 377, and 382 to 416; these read HQST…NFVN, NSLP…GISP, CGVT…SEAK, TWNT…MEEK, NRDS…RPEV, NNLS…WESK, and DMRL…SKGP.

The protein belongs to the PPR family. P subfamily.

The protein resides in the mitochondrion. The chain is Pentatricopeptide repeat-containing protein At1g02370, mitochondrial from Arabidopsis thaliana (Mouse-ear cress).